The primary structure comprises 459 residues: Probable ECA polymerase (459 aa).

The next 11 membrane-spanning stretches (helical) occupy residues 3-23 (LTQFGGLFVVYLISLVFILTL), 37-57 (IFFSLLYLLTFYFGFPLTCLL), 65-85 (VVPVDALLHALLASTCFYGIY), 119-139 (LASVAVVTVGLFFMQNGFLLF), 154-174 (GVALKRFFYFFIPAMLVVYFL), 181-201 (WLFFLISTVAFGILTYVVVGG), 206-226 (IIIAFALFLFIGIVRGWITLW), 227-247 (MLVTAGAIGIVGMFWLALKRY), 340-360 (LVVMGGVLFIPVGAIVVGLII), 377-397 (YKAAILQAFCFGAIFNMIVLA), and 409-429 (VFFCIIFGLCLVIAKLLYWLF).

This sequence belongs to the WzyE family. As to quaternary structure, probably part of a complex composed of WzxE, WzyE and WzzE.

The protein localises to the cell inner membrane. It participates in bacterial outer membrane biogenesis; enterobacterial common antigen biosynthesis. Its function is as follows. Probably involved in the polymerization of enterobacterial common antigen (ECA) trisaccharide repeat units. The chain is Probable ECA polymerase from Photorhabdus laumondii subsp. laumondii (strain DSM 15139 / CIP 105565 / TT01) (Photorhabdus luminescens subsp. laumondii).